Consider the following 196-residue polypeptide: Dephospho-CoA kinase (196 aa).

Residues 6–196 (AIALTGGIGT…QVERFLKTLL (191 aa)) form the DPCK domain. 14 to 19 (GTGKST) is a binding site for ATP.

This sequence belongs to the CoaE family.

The protein localises to the cytoplasm. It carries out the reaction 3'-dephospho-CoA + ATP = ADP + CoA + H(+). It functions in the pathway cofactor biosynthesis; coenzyme A biosynthesis; CoA from (R)-pantothenate: step 5/5. Catalyzes the phosphorylation of the 3'-hydroxyl group of dephosphocoenzyme A to form coenzyme A. The protein is Dephospho-CoA kinase of Helicobacter pylori (strain ATCC 700392 / 26695) (Campylobacter pylori).